The following is a 138-amino-acid chain: Protein FAM136A (138 aa).

It belongs to the FAM136 family.

In Xenopus tropicalis (Western clawed frog), this protein is Protein FAM136A (fam136a).